The primary structure comprises 487 residues: Calcium-dependent mitochondrial ATP-magnesium/phosphate carrier protein 2 (487 aa).

Residues 1-211 (MEATKSSKQN…ISKHIKRSNY (211 aa)) are Mitochondrial intermembrane-facing. EF-hand domains follow at residues 36 to 71 (ERDL…LQIP), 72 to 107 (SGYK…KELE), 108 to 138 (LYRI…AGIE), and 139 to 174 (IKDE…YPHE). Ca(2+)-binding residues include D85, N87, D89, R91, and E96. Ca(2+) is bound by residues D152, D154, D156, and E163. 3 Solcar repeats span residues 206–289 (IKRS…FKNA), 301–389 (IGTT…LKDL), and 400–483 (PGPL…MKKS). A helical membrane pass occupies residues 212 to 229 (FIAGGIAGAASRTATAPL). The Mitochondrial matrix segment spans residues 230 to 263 (DRLKVLLQIQKTDARIREAIKLIWKQGGVRGFFR). A helical membrane pass occupies residues 264-283 (GNGLNIVKVAPESAIKFYAY). Over 284–310 (ELFKNAIGENMGEDKADIGTTVRLFAG) the chain is Mitochondrial intermembrane. The chain crosses the membrane as a helical span at residues 311 to 324 (GMAGAVAQASIYPL). Over 325–363 (DLVKTRLQTYTSQAGVAVPRLGTLTKDILVHEGPRAFYK) the chain is Mitochondrial matrix. A helical transmembrane segment spans residues 364-383 (GLFPSLLGIIPYAGIDLAAY). Topologically, residues 384 to 405 (ETLKDLSRTYILQDAEPGPLVQ) are mitochondrial intermembrane. Residues 406-423 (LGCGTISGALGATCVYPL) traverse the membrane as a helical segment. At 424–457 (QVVRTRMQAERARTSMSGVFRRTISEEGYRALYK) the chain is on the mitochondrial matrix side. The chain crosses the membrane as a helical span at residues 458–477 (GLLPNLLKVVPAASITYMVY). Residues 478-487 (EAMKKSLELD) lie on the Mitochondrial intermembrane side of the membrane.

The protein belongs to the mitochondrial carrier (TC 2.A.29) family. Expressed in flowers, leaves, stems, roots and seedlings, mostly in aerial parts.

The protein resides in the mitochondrion inner membrane. With respect to regulation, counter-exchange transport activity is saturable and inhibited by pyridoxal-5'-phosphate, EDTA and EGTA. Activated by calcium Ca(2+) and manganese Mn(2+) ions, and slightly by iron Fe(2+) and zinc Zn(2+) ions. Repressed by copper ions Cu(2+) and slightly by magnesium Mg(2+) ions. Magnesium Mg(2+) ions promotes slightly ATP uptake, ATP-Mg(2+) being exchanged with ATP(4-). Calcium-dependent mitochondrial carrier protein that catalyzes the import of ATP co-transported with metal divalent cations across the mitochondrial inner membrane in exchange for phosphate (Pi). Can transport phosphate, AMP, ADP, ATP, adenosine 5'-phosphosulfate, sulfate and thiosulfate, and, to a lesser extent, other nucleotides. Binds calcium ions Ca(2+). Also mediates calcium uptake. The polypeptide is Calcium-dependent mitochondrial ATP-magnesium/phosphate carrier protein 2 (Arabidopsis thaliana (Mouse-ear cress)).